We begin with the raw amino-acid sequence, 656 residues long: Macrolide export ATP-binding/permease protein MacB (656 aa).

The ABC transporter domain occupies 6–244 (LEVSACYRSF…AAPKTEVIPA (239 aa)). 42-49 (GASGSGKS) contacts ATP. The next 4 membrane-spanning stretches (helical) occupy residues 277–297 (FLTMLGIIIGIASVVSVVALG), 531–551 (LLISAIAVISLVVGGIGVMNI), 586–606 (LVCLCGGALGVALAYLIGVVF), and 621–641 (SIVAAFACSTLIGVLFGFLPA).

This sequence belongs to the ABC transporter superfamily. Macrolide exporter (TC 3.A.1.122) family. In terms of assembly, homodimer. Part of the tripartite efflux system MacAB-TolC, which is composed of an inner membrane transporter, MacB, a periplasmic membrane fusion protein, MacA, and an outer membrane component, TolC. The complex forms a large protein conduit and can translocate molecules across both the inner and outer membranes. Interacts with MacA.

The protein resides in the cell inner membrane. Functionally, part of the tripartite efflux system MacAB-TolC. MacB is a non-canonical ABC transporter that contains transmembrane domains (TMD), which form a pore in the inner membrane, and an ATP-binding domain (NBD), which is responsible for energy generation. Confers resistance against macrolides. The sequence is that of Macrolide export ATP-binding/permease protein MacB from Shewanella sp. (strain ANA-3).